The chain runs to 408 residues: Histidine--tRNA ligase (408 aa).

Belongs to the class-II aminoacyl-tRNA synthetase family. Homodimer.

The protein resides in the cytoplasm. The enzyme catalyses tRNA(His) + L-histidine + ATP = L-histidyl-tRNA(His) + AMP + diphosphate + H(+). This chain is Histidine--tRNA ligase, found in Campylobacter concisus (strain 13826).